The sequence spans 435 residues: MSEIPIVSNHDLEKYVDRKVVIQGWVHGIRGSNARQFISLRNGGRILQVLAEKEILGEEVFQTVKHLRQETSVSVAGTLVKNEKSSVGFELIMDRIRIVGESENYPITPKEHGIDFLISQRHLWLRSSKQLAILRVRDNLSFAIRKYFHERDFLLIDTPILTGSVGESAGTLFSTEYFDLGNAYLAQTGQLYLEAAIFAHNKVFCYGPTFRAEKSKTRRHLTEFWMVEAEVAFAGHADNLKLQEDFVKTVIKETVQNSLQDLKVLERDPTPLLAYLEKDFPVIDYTKALEILKLKGEDIVWGDDINSEREQMLTMEFGGPIFIQKYPREAKAFYMKVNPDNPKTVLNADLIAPDGVGEIIGGSEREENYENIILRLEEEKLPVESYDWYLDLRKYGSVPHSGFGLGSERMIAWICGLQHVRECIPFPRMMERLYP.

Belongs to the class-II aminoacyl-tRNA synthetase family. As to quaternary structure, homodimer.

The protein resides in the cytoplasm. The enzyme catalyses tRNA(Asn) + L-asparagine + ATP = L-asparaginyl-tRNA(Asn) + AMP + diphosphate + H(+). The sequence is that of Asparagine--tRNA ligase from Leptospira borgpetersenii serovar Hardjo-bovis (strain JB197).